A 515-amino-acid polypeptide reads, in one-letter code: BURP domain-containing protein 9 (515 aa).

The signal sequence occupies residues 1–29 (MKATGGPLPLILFLLIIIVLITAQHTAIA). The 216-residue stretch at 292–507 (YFFEDNLAPG…GRGSIIWVPV (216 aa)) folds into the BURP domain. N-linked (GlcNAc...) asparagine glycans are attached at residues asparagine 321, asparagine 332, and asparagine 470.

As to expression, expressed in shoot and panicles.

The protein is BURP domain-containing protein 9 (BURP9) of Oryza sativa subsp. japonica (Rice).